The primary structure comprises 87 residues: Conotoxin Cl12.3 (87 aa).

The N-terminal stretch at 1 to 19 (MKLTCVLVVLLLFLPYGDL) is a signal peptide. Residues 20 to 42 (ITNNYIGGAARKVTPWRRNLKTR) constitute a propeptide that is removed on maturation.

Belongs to the conotoxin O1 superfamily. Contains 4 disulfide bonds. In terms of tissue distribution, expressed by the venom duct.

It localises to the secreted. This Californiconus californicus (California cone) protein is Conotoxin Cl12.3.